The primary structure comprises 389 residues: Chalcone synthase 4-1 (389 aa).

Cys-164 is a catalytic residue.

It belongs to the thiolase-like superfamily. Chalcone/stilbene synthases family.

It carries out the reaction (E)-4-coumaroyl-CoA + 3 malonyl-CoA + 3 H(+) = 2',4,4',6'-tetrahydroxychalcone + 3 CO2 + 4 CoA. Its pathway is secondary metabolite biosynthesis; flavonoid biosynthesis. The primary product of this enzyme is 4,2',4',6'-tetrahydroxychalcone (also termed naringenin-chalcone or chalcone) which can under specific conditions spontaneously isomerize into naringenin. In Medicago sativa (Alfalfa), this protein is Chalcone synthase 4-1 (CHS4-1).